A 137-amino-acid chain; its full sequence is NADH-quinone oxidoreductase subunit A (137 aa).

3 helical membrane-spanning segments follow: residues 12–32, 68–88, and 94–114; these read WAFA…LGVS, LVAM…AWAV, and GWVG…GLVY.

It belongs to the complex I subunit 3 family. In terms of assembly, NDH-1 is composed of 13 different subunits. Subunits NuoA, H, J, K, L, M, N constitute the membrane sector of the complex.

The protein resides in the cell inner membrane. The enzyme catalyses a quinone + NADH + 5 H(+)(in) = a quinol + NAD(+) + 4 H(+)(out). Functionally, NDH-1 shuttles electrons from NADH, via FMN and iron-sulfur (Fe-S) centers, to quinones in the respiratory chain. The immediate electron acceptor for the enzyme in this species is believed to be ubiquinone. Couples the redox reaction to proton translocation (for every two electrons transferred, four hydrogen ions are translocated across the cytoplasmic membrane), and thus conserves the redox energy in a proton gradient. The protein is NADH-quinone oxidoreductase subunit A of Ectopseudomonas mendocina (strain ymp) (Pseudomonas mendocina).